The primary structure comprises 292 residues: Rab effector Noc2 (292 aa).

The RabBD domain occupies 41–158 (QRKSQSLSPA…KRSGAWFYKG (118 aa)). An FYVE-type zinc finger spans residues 89 to 146 (GNGLSQCLLCGEVLGFLGSSSVFCKDCRKKVCTKCGIEASPSQKRPLWLCKICSEQRE). Cys95, Cys98, Cys112, Cys115, Cys120, Cys123, Cys138, and Cys141 together coordinate Zn(2+). A disordered region spans residues 175–292 (PSFRPLPVEP…RTLAGPRGPR (118 aa)). Over residues 221–235 (LDDRLRPAGVRDPKG) the composition is skewed to basic and acidic residues. Ser248 carries the post-translational modification Phosphoserine. Positions 257 to 269 (ASCLSGSQSSLAS) are enriched in low complexity.

In terms of assembly, recruited to dense-core vesicles through specific interaction with RAB27A in endocrine cells. Interacts with RAB3A, RAB3B, RAB3C and RAB3D. Interacts with ZYX.

It is found in the cytoplasm. The protein localises to the cytoplasmic vesicle. Its subcellular location is the secretory vesicle membrane. In terms of biological role, rab GTPase effector involved in the late steps of regulated exocytosis, both in endocrine and exocrine cells. This is Rab effector Noc2 (RPH3AL) from Bos taurus (Bovine).